The primary structure comprises 270 residues: Orotidine 5'-phosphate decarboxylase (270 aa).

Substrate-binding positions include Asp43, Lys65 to His67, Asp96 to Thr105, Tyr217, and Arg236. The Proton donor role is filled by Lys98.

It belongs to the OMP decarboxylase family.

It carries out the reaction orotidine 5'-phosphate + H(+) = UMP + CO2. It functions in the pathway pyrimidine metabolism; UMP biosynthesis via de novo pathway; UMP from orotate: step 2/2. In Aureobasidium pullulans (Black yeast), this protein is Orotidine 5'-phosphate decarboxylase (URA3).